A 679-amino-acid chain; its full sequence is Mitotic interactor and substrate of PLK1 (679 aa).

At serine 78 the chain carries Phosphoserine; by CDK1; in vitro. Disordered regions lie at residues alanine 151 to glutamate 182 and alanine 206 to valine 245. The segment covering arginine 153 to glycine 163 has biased composition (polar residues). Serine 156 carries the phosphoserine modification. Threonine 164 and threonine 172 each carry phosphothreonine; by CDK1; in vitro. At threonine 179 the chain carries Phosphothreonine. The residue at position 214 (serine 214) is a Phosphoserine; by CDK1; in vitro. Threonine 219 carries the phosphothreonine modification. Threonine 224 carries the post-translational modification Phosphothreonine; by CDK1; in vitro. Residue serine 284 is modified to Phosphoserine; by CDK1; in vitro. A Phosphothreonine; by CDK1; in vitro modification is found at threonine 287. Residue serine 348 is modified to Phosphoserine. The segment covering glutamine 360 to histidine 371 has biased composition (basic and acidic residues). Residues glutamine 360–arginine 419 form a disordered region. Threonine 377 is subject to Phosphothreonine; by CDK1; in vitro. Serine 382 carries the phosphoserine; by CDK1; in vitro modification. 3 positions are modified to phosphoserine; by PLK1; in vitro: serine 394, serine 395, and serine 397. Serine 400 is subject to Phosphoserine. Low complexity predominate over residues proline 401 to alanine 411. Serine 430 carries the post-translational modification Phosphoserine. A disordered region spans residues proline 447–alanine 494. Serine 471 carries the phosphoserine; by PLK1; in vitro modification. Polar residues predominate over residues glutamate 472–glutamine 482. Phosphoserine is present on residues serine 541 and serine 543. A coiled-coil region spans residues aspartate 545–leucine 569. Residues arginine 557 to asparagine 567 are compositionally biased toward basic and acidic residues. Disordered stretches follow at residues arginine 557 to serine 598 and aspartate 622 to proline 643. Serine 575 is modified (phosphoserine; by CDK1; in vitro). Residue threonine 577 is modified to Phosphothreonine. Residues serine 582 and serine 586 each carry the phosphoserine; by PLK1; in vitro modification. Residues aspartate 583–serine 593 show a composition bias toward low complexity. Serine 675 is subject to Phosphoserine.

The protein belongs to the MISP family. Associates with F-actin. Interacts with DCTN1; this interaction regulates DCTN1 distribution at the cell cortex. Interacts with PTK2/FAK and MAPRE1. In terms of processing, phosphorylated by CDK1 and PLK1. CDK1 is the priming kinase for PLK1 phosphorylation. Phosphorylation by PLK1 is required for proper spindle orientation at metaphase.

The protein localises to the cell junction. Its subcellular location is the focal adhesion. It localises to the cytoplasm. It is found in the cytoskeleton. The protein resides in the cell cortex. Its function is as follows. Plays a role in mitotic spindle orientation and mitotic progression. Regulates the distribution of dynactin at the cell cortex in a PLK1-dependent manner, thus stabilizing cortical and astral microtubule attachments required for proper mitotic spindle positioning. May link microtubules to the actin cytospkeleton and focal adhesions. May be required for directed cell migration and centrosome orientation. May also be necessary for proper stacking of the Golgi apparatus. This Homo sapiens (Human) protein is Mitotic interactor and substrate of PLK1.